The primary structure comprises 315 residues: Acetyl-coenzyme A carboxylase carboxyl transferase subunit beta, chloroplastic (315 aa).

Positions 47–315 (LWTRCDSCEN…VYKESNSYLF (269 aa)) constitute a CoA carboxyltransferase N-terminal domain. The Zn(2+) site is built by cysteine 51, cysteine 54, cysteine 70, and cysteine 73. Residues 51 to 73 (CDSCENMLYVRFLKQNKRICEEC) form a C4-type zinc finger.

The protein belongs to the AccD/PCCB family. As to quaternary structure, acetyl-CoA carboxylase is a heterohexamer composed of biotin carboxyl carrier protein, biotin carboxylase and 2 subunits each of ACCase subunit alpha and ACCase plastid-coded subunit beta (accD). Requires Zn(2+) as cofactor.

It localises to the plastid. It is found in the chloroplast stroma. The enzyme catalyses N(6)-carboxybiotinyl-L-lysyl-[protein] + acetyl-CoA = N(6)-biotinyl-L-lysyl-[protein] + malonyl-CoA. It participates in lipid metabolism; malonyl-CoA biosynthesis; malonyl-CoA from acetyl-CoA: step 1/1. In terms of biological role, component of the acetyl coenzyme A carboxylase (ACC) complex. Biotin carboxylase (BC) catalyzes the carboxylation of biotin on its carrier protein (BCCP) and then the CO(2) group is transferred by the transcarboxylase to acetyl-CoA to form malonyl-CoA. The sequence is that of Acetyl-coenzyme A carboxylase carboxyl transferase subunit beta, chloroplastic from Physcomitrium patens (Spreading-leaved earth moss).